The chain runs to 217 residues: Adenylate kinase (217 aa).

10 to 15 is an ATP binding site; sequence GAGKGT. Residues 30–59 form an NMP region; sequence STGDMFRAAMKNETELGLKAKSYMDAGELV. AMP is bound by residues Thr31, Arg36, 57 to 59, 85 to 88, and Gln92; these read ELV and GFPR. The segment at 126–163 is LID; it reads GRRVSPTSGRTYHVIFNPPKVEGICDVDGSELIQRDDD. ATP contacts are provided by residues Arg127 and 136-137; that span reads TY. AMP is bound by residues Arg160 and Arg171. Gln199 is a binding site for ATP.

The protein belongs to the adenylate kinase family. In terms of assembly, monomer.

Its subcellular location is the cytoplasm. The enzyme catalyses AMP + ATP = 2 ADP. Its pathway is purine metabolism; AMP biosynthesis via salvage pathway; AMP from ADP: step 1/1. Its function is as follows. Catalyzes the reversible transfer of the terminal phosphate group between ATP and AMP. Plays an important role in cellular energy homeostasis and in adenine nucleotide metabolism. The chain is Adenylate kinase from Halalkalibacterium halodurans (strain ATCC BAA-125 / DSM 18197 / FERM 7344 / JCM 9153 / C-125) (Bacillus halodurans).